Consider the following 303-residue polypeptide: Putative fimbrium subunit Fim1C (303 aa).

Positions 1 to 22 (MKKQALICALLATVLLPGCSED) are cleaved as a signal peptide.

It belongs to the bacteroidetes fimbrillin superfamily. Mfa-like family. In terms of assembly, may be part of the fimbrial tip.

It is found in the fimbrium. Its function is as follows. Putative component of the fimbrium tip. Fimbriae are filamentous appendages on the cell surface that mediate cell adhesion and biofilm formation. In Bacteroides uniformis (strain ATCC 8492 / DSM 6597 / CCUG 4942 / CIP 103695 / JCM 5828 / KCTC 5204 / NCTC 13054 / VPI 0061), this protein is Putative fimbrium subunit Fim1C (fim1C).